The following is a 393-amino-acid chain: MNVPATRKDFMIVNMGPHHPSMHGVLRLILSLDGEDVIDCEPILGYLHRGMEKIAENRTIIQYLPYVTRWDYLATMFTEAITINGPEQLGNIQVPKRASYIRVIMLELSRIASHLLWLGPFMADIGGQTPFFYIFRERELIYDLFEAATGMRMMHNYFRIGGVAADLPHGWLDKCLDFCDYFLTGVAEYQKLITRNPIFLERVEGIGIVSAEEAINWGLSGPMLRASGVRWDLRKVDHYECYDEFDWGVQWQKEGDSLARYLVRIGEMTESVKIIQQALEGIPGGPYENLETRSFDRERNREWNDFEYRFISKKTSPAFELPKQELYVRVEAPKGELGIFLIGDQSSFPWRWKIRPPGFINLQILPQLIKRMKLADIMTILGSIDIIMGEVDR.

It belongs to the complex I 49 kDa subunit family. In terms of assembly, NDH is composed of at least 16 different subunits, 5 of which are encoded in the nucleus.

It is found in the plastid. The protein localises to the chloroplast thylakoid membrane. It carries out the reaction a plastoquinone + NADH + (n+1) H(+)(in) = a plastoquinol + NAD(+) + n H(+)(out). It catalyses the reaction a plastoquinone + NADPH + (n+1) H(+)(in) = a plastoquinol + NADP(+) + n H(+)(out). Its function is as follows. NDH shuttles electrons from NAD(P)H:plastoquinone, via FMN and iron-sulfur (Fe-S) centers, to quinones in the photosynthetic chain and possibly in a chloroplast respiratory chain. The immediate electron acceptor for the enzyme in this species is believed to be plastoquinone. Couples the redox reaction to proton translocation, and thus conserves the redox energy in a proton gradient. The sequence is that of NAD(P)H-quinone oxidoreductase subunit H, chloroplastic from Populus alba (White poplar).